The primary structure comprises 521 residues: Cysteine protease atg-4.2 (521 aa).

Residues 90 to 100 (MMGSIRPSSSS) are compositionally biased toward low complexity. The tract at residues 90-109 (MMGSIRPSSSSQDVHSTGEI) is disordered. The active-site Nucleophile is C203. Catalysis depends on residues D394 and H396. Residues 499–521 (PSYEREVSETEQAQADKHGFEML) form a disordered region.

This sequence belongs to the peptidase C54 family.

Its subcellular location is the cytoplasm. The enzyme catalyses [protein]-C-terminal L-amino acid-glycyl-phosphatidylethanolamide + H2O = [protein]-C-terminal L-amino acid-glycine + a 1,2-diacyl-sn-glycero-3-phosphoethanolamine. Its function is as follows. Cysteine protease required for autophagy. Cleaves the C-terminal amino acid of ATG8 family proteins lgg-1, to reveal a C-terminal glycine. Exposure of the glycine at the C-terminus is essential for ATG8 proteins conjugation to phosphatidylethanolamine (PE) and insertion to membranes, which is necessary for autophagy. Its cleavage activity is functionally redundant to atg-4.1, but it cleaves lgg-1 precursors less efficiently than atg-4.1. In contrast to atg-4.1, plays a more significant role in the later phases of autophagy and in addition has a role in autophagosome maturation. Acts redundantly with atg-4.1 to promote the lgg-1 delipidation to release the protein from membranes, which facilitates multiple events during macroautophagy. Regulates the accumulation of autophagic structures in neurons and is specifically, required for the maturation and elimination of autophagosomes from the synaptic region of AIY interneurons. The sequence is that of Cysteine protease atg-4.2 from Caenorhabditis elegans.